We begin with the raw amino-acid sequence, 64 residues long: Large ribosomal subunit protein uL30 (64 aa).

This sequence belongs to the universal ribosomal protein uL30 family. Part of the 50S ribosomal subunit.

The polypeptide is Large ribosomal subunit protein uL30 (Rhodopseudomonas palustris (strain BisB18)).